The chain runs to 336 residues: Putative ataxin-3 homolog (336 aa).

The 184-residue stretch at Gly-10–Ser-193 folds into the Josephin domain. Cys-23 acts as the Nucleophile in catalysis. The active-site Proton acceptor is the His-132. Asn-147 is an active-site residue. Residues Gln-244–Pro-263 form the UIM domain. A disordered region spans residues Ile-281–Asp-336. Residues Ala-299–Leu-327 show a composition bias toward polar residues.

It is found in the nucleus. The catalysed reaction is Thiol-dependent hydrolysis of ester, thioester, amide, peptide and isopeptide bonds formed by the C-terminal Gly of ubiquitin (a 76-residue protein attached to proteins as an intracellular targeting signal).. In terms of biological role, interacts with key regulators of transcription and represses transcription. Acts as a histone-binding protein that regulates transcription. Acts as a deubiquitinating enzyme. This chain is Putative ataxin-3 homolog, found in Oryza sativa subsp. japonica (Rice).